The sequence spans 220 residues: Ribose-5-phosphate isomerase A (220 aa).

Substrate-binding positions include 28 to 31 (TGST), 81 to 84 (DGAD), and 94 to 97 (KGGG). The active-site Proton acceptor is E103. Position 121 (K121) interacts with substrate.

The protein belongs to the ribose 5-phosphate isomerase family. Homodimer.

The enzyme catalyses aldehydo-D-ribose 5-phosphate = D-ribulose 5-phosphate. It functions in the pathway carbohydrate degradation; pentose phosphate pathway; D-ribose 5-phosphate from D-ribulose 5-phosphate (non-oxidative stage): step 1/1. In terms of biological role, catalyzes the reversible conversion of ribose-5-phosphate to ribulose 5-phosphate. The chain is Ribose-5-phosphate isomerase A from Vesicomyosocius okutanii subsp. Calyptogena okutanii (strain HA).